A 319-amino-acid chain; its full sequence is Ribonuclease Z (319 aa).

Zn(2+)-binding residues include His62, His64, Asp66, His67, His139, Asp209, and His268. Asp66 serves as the catalytic Proton acceptor.

It belongs to the RNase Z family. In terms of assembly, homodimer. The cofactor is Zn(2+).

It catalyses the reaction Endonucleolytic cleavage of RNA, removing extra 3' nucleotides from tRNA precursor, generating 3' termini of tRNAs. A 3'-hydroxy group is left at the tRNA terminus and a 5'-phosphoryl group is left at the trailer molecule.. Its function is as follows. Zinc phosphodiesterase, which displays some tRNA 3'-processing endonuclease activity. Probably involved in tRNA maturation, by removing a 3'-trailer from precursor tRNA. In Pseudomonas putida (strain ATCC 47054 / DSM 6125 / CFBP 8728 / NCIMB 11950 / KT2440), this protein is Ribonuclease Z.